The primary structure comprises 121 residues: Small ribosomal subunit protein uS13 (121 aa).

Residues arginine 93 to lysine 121 form a disordered region.

The protein belongs to the universal ribosomal protein uS13 family. As to quaternary structure, part of the 30S ribosomal subunit. Forms a loose heterodimer with protein S19. Forms two bridges to the 50S subunit in the 70S ribosome.

In terms of biological role, located at the top of the head of the 30S subunit, it contacts several helices of the 16S rRNA. In the 70S ribosome it contacts the 23S rRNA (bridge B1a) and protein L5 of the 50S subunit (bridge B1b), connecting the 2 subunits; these bridges are implicated in subunit movement. Contacts the tRNAs in the A and P-sites. In Albidiferax ferrireducens (strain ATCC BAA-621 / DSM 15236 / T118) (Rhodoferax ferrireducens), this protein is Small ribosomal subunit protein uS13.